A 354-amino-acid chain; its full sequence is Probable serine acetyltransferase 2 (354 aa).

It belongs to the transferase hexapeptide repeat family. In terms of assembly, homomultimer.

It catalyses the reaction L-serine + acetyl-CoA = O-acetyl-L-serine + CoA. Its pathway is amino-acid biosynthesis; L-cysteine biosynthesis; L-cysteine from L-serine: step 1/2. This is Probable serine acetyltransferase 2 (SAT2) from Oryza sativa subsp. japonica (Rice).